A 551-amino-acid chain; its full sequence is Meiotically up-regulated gene 184 protein (551 aa).

Positions 12-78 (DYYAILKLQK…TKRLIYDQLF (67 aa)) constitute a J domain. Residues 85 to 122 (RSQYKPNSTSNPSKHTSAYASYNKGKNSKWSSPFASTT) are compositionally biased toward polar residues. Disordered regions lie at residues 85–153 (RSQY…FPRD), 176–226 (RQEP…SVYK), and 334–359 (EAESSNPFSFDFGSSGPKSRSDTRNN). The segment covering 124-133 (KPQESSEKYS) has biased composition (basic and acidic residues). The span at 134–146 (KKSSTRKKEHFNK) shows a compositional bias: basic residues. Composition is skewed to basic and acidic residues over residues 176 to 187 (RQEPESLKKENN) and 203 to 219 (GPKDSSKHPSNDGKIPE).

The protein resides in the cytoplasm. It is found in the cytoskeleton. Has a role in sporulation. This Schizosaccharomyces pombe (strain 972 / ATCC 24843) (Fission yeast) protein is Meiotically up-regulated gene 184 protein (mug184).